We begin with the raw amino-acid sequence, 208 residues long: Protein GrpE (208 aa).

Residues 1–12 (MTNKDESVEKNT) are compositionally biased toward basic and acidic residues. Residues 1 to 59 (MTNKDESVEKNTESTVEETNIKQNIDDSVEQAEESKGHLQDEAIEETSDENVIEEIDPK) form a disordered region. Over residues 13-23 (ESTVEETNIKQ) the composition is skewed to polar residues. Acidic residues predominate over residues 42-55 (EAIEETSDENVIEE).

Belongs to the GrpE family. Homodimer.

The protein resides in the cytoplasm. In terms of biological role, participates actively in the response to hyperosmotic and heat shock by preventing the aggregation of stress-denatured proteins, in association with DnaK and GrpE. It is the nucleotide exchange factor for DnaK and may function as a thermosensor. Unfolded proteins bind initially to DnaJ; upon interaction with the DnaJ-bound protein, DnaK hydrolyzes its bound ATP, resulting in the formation of a stable complex. GrpE releases ADP from DnaK; ATP binding to DnaK triggers the release of the substrate protein, thus completing the reaction cycle. Several rounds of ATP-dependent interactions between DnaJ, DnaK and GrpE are required for fully efficient folding. The protein is Protein GrpE of Staphylococcus aureus (strain Mu3 / ATCC 700698).